An 84-amino-acid chain; its full sequence is Delta-stichotoxin-Sgt3a (84 aa).

The N-terminal stretch at 1-19 is a signal peptide; it reads MAYLKIVLVALMLVVAVSA. The propeptide occupies 20–33; that stretch reads MRLSDQEDQDISVA. Cystine bridges form between C38/C78, C40/C68, and C61/C79. A propeptide is located at residue G84.

It belongs to the sea anemone sodium channel inhibitory toxin family. Type II subfamily.

The protein resides in the secreted. It localises to the nematocyst. Functionally, binds specifically to voltage-gated sodium channels (Nav), thereby delaying their inactivation during signal transduction. The polypeptide is Delta-stichotoxin-Sgt3a (Stichodactyla gigantea (Giant carpet anemone)).